Reading from the N-terminus, the 598-residue chain is IQ calmodulin-binding motif-containing protein 1 (598 aa).

Residues 1-157 (MKPTGTDPRI…SLFWLLGGHV (157 aa)) are interaction with BBS1, BBS8 and BBS9. Positions 287–598 (QEVEEQKLHQ…NLFIGGTKPP (312 aa)) are interaction with CEP290, BBS1, BBS2, BBS4, BBS5, BBS7, BBS8 and BBS9. IQ domains follow at residues 294–317 (LHQA…LKKL), 318–338 (PSAV…MLLE), 387–416 (EEKS…SLIE), and 417–437 (YKAA…CRKK). Residues 336-373 (LLEINRQKEEEDLKLQLQLQRQRAMRLSRELQLSMLEI) are a coiled coil. Residues 530–598 (AEGKEPELFL…NLFIGGTKPP (69 aa)) are interaction with BBS1, BBS2, BBS4, BBS7, BBS8 and BBS9. The residue at position 572 (serine 572) is a Phosphoserine.

In terms of assembly, interacts with CEP290/NPHP6; IQCB1/NPHP5 and CEP290 are proposed to form a functional NPHP5-6 module/NPHP6; localized to the centrosome. Interacts with calmodulin, ATXN10. Interacts with NPHP1, INVS, NPHP4 and RPGRIP1L; these interactions likely require additional interactors. Associates with the BBSome complex; interacts with BBS1, BBS2, BBS4, BBS5, BBS7, BBS8 and BBS9. Ubiquitously expressed in fetal and adult tissues. Localized to the outer segments and connecting cilia of photoreceptor cells. Up-regulated in a number of primary colorectal and gastric tumors.

The protein localises to the cytoplasm. Its subcellular location is the cytoskeleton. It localises to the microtubule organizing center. The protein resides in the centrosome. It is found in the centriole. Involved in ciliogenesis. The function in an early step in cilia formation depends on its association with CEP290/NPHP6. Involved in regulation of the BBSome complex integrity, specifically for presence of BBS2 and BBS5 in the complex, and in ciliary targeting of selected BBSome cargos. May play a role in controlling entry of the BBSome complex to cilia possibly implicating CEP290/NPHP6. The sequence is that of IQ calmodulin-binding motif-containing protein 1 (IQCB1) from Homo sapiens (Human).